Here is a 103-residue protein sequence, read N- to C-terminus: Small ribosomal subunit protein uS10 (103 aa).

Belongs to the universal ribosomal protein uS10 family. As to quaternary structure, part of the 30S ribosomal subunit.

Its function is as follows. Involved in the binding of tRNA to the ribosomes. This chain is Small ribosomal subunit protein uS10, found in Chlorobaculum tepidum (strain ATCC 49652 / DSM 12025 / NBRC 103806 / TLS) (Chlorobium tepidum).